A 130-amino-acid polypeptide reads, in one-letter code: Holo-[acyl-carrier-protein] synthase (130 aa).

Positions 8 and 62 each coordinate Mg(2+).

The protein belongs to the P-Pant transferase superfamily. AcpS family. The cofactor is Mg(2+).

The protein localises to the cytoplasm. It carries out the reaction apo-[ACP] + CoA = holo-[ACP] + adenosine 3',5'-bisphosphate + H(+). Its function is as follows. Transfers the 4'-phosphopantetheine moiety from coenzyme A to a Ser of acyl-carrier-protein. The protein is Holo-[acyl-carrier-protein] synthase of Polynucleobacter asymbioticus (strain DSM 18221 / CIP 109841 / QLW-P1DMWA-1) (Polynucleobacter necessarius subsp. asymbioticus).